We begin with the raw amino-acid sequence, 342 residues long: Ornithine carbamoyltransferase, catabolic (342 aa).

Residues serine 59–threonine 62, serine 83, arginine 110, and histidine 137–glutamine 140 each bind carbamoyl phosphate. Residues asparagine 169, aspartate 235, and serine 239 to leucine 240 contribute to the L-ornithine site. Carbamoyl phosphate contacts are provided by residues cysteine 276–leucine 277 and arginine 328.

The protein belongs to the aspartate/ornithine carbamoyltransferase superfamily. OTCase family. As to quaternary structure, dodecamer (tetramer of trimers).

Its subcellular location is the cytoplasm. The enzyme catalyses carbamoyl phosphate + L-ornithine = L-citrulline + phosphate + H(+). The protein operates within amino-acid degradation; L-arginine degradation via ADI pathway; carbamoyl phosphate from L-arginine: step 2/2. Nvolved in the catabolism of arginine. Catalyzes the phosphorolysis of citrulline, the reverse reaction of the biosynthetic one, yielding ornithine and carbamoyl phosphate which serve to generate ATP from ADP. The chain is Ornithine carbamoyltransferase, catabolic (arcB) from Malacoplasma penetrans (strain HF-2) (Mycoplasma penetrans).